A 384-amino-acid chain; its full sequence is Probable UDP-galactopyranose mutase (384 aa).

The N-terminal stretch at 1 to 19 (MNNKNIMIVGAGFSGVVIA) is a signal peptide. FAD contacts are provided by residues Ser-14, 33-34 (DR), Asn-41, and 60-61 (HI). UDP-alpha-D-galactose is bound by residues Asn-84, Phe-151, Thr-156, Trp-160, and Tyr-185. Phe-219 is an FAD binding site. 3 residues coordinate UDP-alpha-D-galactose: Asn-270, Arg-280, and Tyr-314. Arg-343 serves as a coordination point for FAD. Tyr-349 is a binding site for UDP-alpha-D-galactose. 350–355 (LDMDVT) is a binding site for FAD.

It belongs to the UDP-galactopyranose/dTDP-fucopyranose mutase family. Homodimer. It depends on FAD as a cofactor.

It catalyses the reaction UDP-alpha-D-galactose = UDP-alpha-D-galactofuranose. It functions in the pathway bacterial outer membrane biogenesis; LPS O-antigen biosynthesis. In terms of biological role, catalyzes the interconversion through a 2-keto intermediate of uridine diphosphogalactopyranose (UDP-GalP) into uridine diphosphogalactofuranose (UDP-GalF). The polypeptide is Probable UDP-galactopyranose mutase (rfbD) (Klebsiella pneumoniae).